The sequence spans 484 residues: Ubiquinone biosynthesis monooxygenase COQ6, mitochondrial (484 aa).

The N-terminal 41 residues, 1 to 41, are a transit peptide targeting the mitochondrion; it reads MLSLAKAKLAVVGIGRQCVAVRTLNGARAVHRSFSSSEHDQ.

The protein belongs to the UbiH/COQ6 family. As to quaternary structure, component of a multi-subunit COQ enzyme complex, composed of at least coq3, coq4, coq5, coq6, coq7 and coq9. Interacts with coq8b and coq7. It depends on FAD as a cofactor.

Its subcellular location is the mitochondrion inner membrane. The protein localises to the golgi apparatus. The protein resides in the cell projection. It carries out the reaction a 4-hydroxy-3-(all-trans-polyprenyl)benzoate + 2 reduced [2Fe-2S]-[ferredoxin] + O2 + 2 H(+) = a 3,4-dihydroxy-5-(all-trans-polyprenyl)benzoate + 2 oxidized [2Fe-2S]-[ferredoxin] + H2O. The catalysed reaction is a 2-methoxy-6-(all-trans-polyprenyl)phenol + 2 reduced [2Fe-2S]-[ferredoxin] + O2 + 2 H(+) = a 2-methoxy-6-(all-trans-polyprenyl)benzene-1,4-diol + 2 oxidized [2Fe-2S]-[ferredoxin] + H2O. It participates in cofactor biosynthesis; ubiquinone biosynthesis. Its function is as follows. FAD-dependent monooxygenase required for two non-consecutive steps during ubiquinone biosynthesis. Required for the C5-ring hydroxylation during ubiquinone biosynthesis by catalyzing the hydroxylation of 4-hydroxy-3-(all-trans-polyprenyl)benzoic acid to 3,4-dihydroxy-5-(all-trans-polyprenyl)benzoic acid. Also acts downstream of coq4, for the C1-hydroxylation during ubiquinone biosynthesis by catalyzing the hydroxylation of 2-methoxy-6-(all-trans-polyprenyl)phenol to 2-methoxy-6-(all-trans-polyprenyl)benzene-1,4-diol. The electrons required for the hydroxylation reaction are funneled indirectly to coq6 from NADPH via a ferredoxin/ferredoxin reductase system. The sequence is that of Ubiquinone biosynthesis monooxygenase COQ6, mitochondrial from Danio rerio (Zebrafish).